The sequence spans 232 residues: MSNVDHAEIAKFEALAHRWWDRESEFKPLHDINPLRVNWIDERAGLAGKKVLDIGCGGGILSEAMAQRGANVTGIDMGEAPLAVARLHQLESGVAVDYRQITAEQMAEEMPGQFDVVTCLEMLEHVPDPASVIRACHRLVKPGGQVFLSTINRNPKAYLFAVIGAEYILQLLPRGTHDFRKFIRPSELGAWSREAGLEVKDIIGLTYNPLTKHYKLANDVDVNYMVQTQREA.

Residues R36, G55, D76, and L120 each contribute to the S-adenosyl-L-methionine site.

This sequence belongs to the methyltransferase superfamily. UbiG/COQ3 family.

The catalysed reaction is a 3-demethylubiquinol + S-adenosyl-L-methionine = a ubiquinol + S-adenosyl-L-homocysteine + H(+). It catalyses the reaction a 3-(all-trans-polyprenyl)benzene-1,2-diol + S-adenosyl-L-methionine = a 2-methoxy-6-(all-trans-polyprenyl)phenol + S-adenosyl-L-homocysteine + H(+). The protein operates within cofactor biosynthesis; ubiquinone biosynthesis. Its function is as follows. O-methyltransferase that catalyzes the 2 O-methylation steps in the ubiquinone biosynthetic pathway. In Pseudomonas aeruginosa (strain UCBPP-PA14), this protein is Ubiquinone biosynthesis O-methyltransferase.